A 230-amino-acid chain; its full sequence is Orotidine 5'-phosphate decarboxylase (230 aa).

Residues Asp10, Lys31, 58 to 67 (DLKLHDIPNT), Thr117, Arg179, Gln188, Gly208, and Arg209 contribute to the substrate site. The active-site Proton donor is the Lys60.

This sequence belongs to the OMP decarboxylase family. Type 1 subfamily. As to quaternary structure, homodimer.

The catalysed reaction is orotidine 5'-phosphate + H(+) = UMP + CO2. It functions in the pathway pyrimidine metabolism; UMP biosynthesis via de novo pathway; UMP from orotate: step 2/2. Functionally, catalyzes the decarboxylation of orotidine 5'-monophosphate (OMP) to uridine 5'-monophosphate (UMP). The sequence is that of Orotidine 5'-phosphate decarboxylase from Staphylococcus aureus (strain Mu3 / ATCC 700698).